The primary structure comprises 549 residues: Probable protein kinase UbiB (549 aa).

The 379-residue stretch at 123 to 501 folds into the Protein kinase domain; that stretch reads DFNETPLASA…QQQAHKSNYL (379 aa). ATP-binding positions include 129 to 137 and lysine 152; that span reads LASASISQV. The Proton acceptor role is filled by aspartate 287. Transmembrane regions (helical) follow at residues 496–516 and 520–540; these read HKSN…TLLI and ATLW…FVGW.

It belongs to the ABC1 family. UbiB subfamily.

It localises to the cell inner membrane. It participates in cofactor biosynthesis; ubiquinone biosynthesis [regulation]. Its function is as follows. Is probably a protein kinase regulator of UbiI activity which is involved in aerobic coenzyme Q (ubiquinone) biosynthesis. This is Probable protein kinase UbiB from Shewanella baltica (strain OS185).